Consider the following 134-residue polypeptide: Putative F-box protein R638 (134 aa).

The F-box domain maps to 5 to 52 (NIMNLLNEDCILHILSFLADKDKIQLSLSCKSNLKFLHKTIYDDIYFY).

This chain is Putative F-box protein R638, found in Acanthamoeba polyphaga mimivirus (APMV).